Here is a 291-residue protein sequence, read N- to C-terminus: Ribonuclease Z (291 aa).

7 residues coordinate Zn(2+): H61, H63, D65, H66, H133, D201, and H257. The Proton acceptor role is filled by D65.

It belongs to the RNase Z family. In terms of assembly, homodimer. Requires Zn(2+) as cofactor.

It catalyses the reaction Endonucleolytic cleavage of RNA, removing extra 3' nucleotides from tRNA precursor, generating 3' termini of tRNAs. A 3'-hydroxy group is left at the tRNA terminus and a 5'-phosphoryl group is left at the trailer molecule.. Zinc phosphodiesterase, which displays some tRNA 3'-processing endonuclease activity. Probably involved in tRNA maturation, by removing a 3'-trailer from precursor tRNA. This chain is Ribonuclease Z, found in Saccharolobus islandicus (strain Y.N.15.51 / Yellowstone #2) (Sulfolobus islandicus).